Consider the following 403-residue polypeptide: Phosphoglycerate kinase (403 aa).

Residues 21 to 23, R36, 59 to 62, R119, and R154 each bind substrate; these read DFN and HLGR. Residues K207, G299, E330, and 357-360 contribute to the ATP site; that span reads GGDA.

It belongs to the phosphoglycerate kinase family. Monomer.

The protein resides in the cytoplasm. The enzyme catalyses (2R)-3-phosphoglycerate + ATP = (2R)-3-phospho-glyceroyl phosphate + ADP. The protein operates within carbohydrate degradation; glycolysis; pyruvate from D-glyceraldehyde 3-phosphate: step 2/5. The protein is Phosphoglycerate kinase of Chlamydia caviae (strain ATCC VR-813 / DSM 19441 / 03DC25 / GPIC) (Chlamydophila caviae).